The following is a 154-amino-acid chain: Protein E6 (154 aa).

2 zinc fingers span residues 30–66 (CIFC…CVKC) and 103–139 (CCKC…CLHC).

Belongs to the papillomaviridae E6 protein family. As to quaternary structure, forms homodimers. Interacts with ubiquitin-protein ligase UBE3A/E6-AP; this interaction stimulates UBE3A ubiquitin activity. Interacts with host TP53 and EP300; this interaction inhibits TP53 activity.

It is found in the host cytoplasm. The protein resides in the host nucleus. Functionally, plays a major role in the induction and maintenance of cellular transformation. E6 associates with host UBE3A/E6-AP ubiquitin-protein ligase and modulates its activity. Sequesters tumor suppressor TP53 in the host cytoplasm and modulates its activity by interacting with host EP300 that results in the reduction of TP53 acetylation and activation. In turn, apoptosis induced by DNA damage is inhibited. E6 also protects host keratinocytes from apoptosis by mediating the degradation of host BAK1. May also inhibit host immune response. This Human papillomavirus 7 protein is Protein E6.